A 384-amino-acid chain; its full sequence is MAP kinase-activated protein kinase 3 (384 aa).

Met-1 is subject to N-acetylmethionine. Residues 1–33 (MDGETAGEKGSLVPQPGALGAPALGGAPAPGVR) form a disordered region. The span at 14 to 31 (PQPGALGAPALGGAPAPG) shows a compositional bias: low complexity. The region spanning 46 to 306 (QLSKQVLGLG…IMQFMNHPWI (261 aa)) is the Protein kinase domain. ATP is bound by residues 52-60 (LGLGVNGKV) and Lys-75. The active-site Proton acceptor is the Asp-168. Thr-203 is subject to Phosphothreonine; by MAPK14. Residue Ser-253 is modified to Phosphoserine; by MAPK14. At Ser-309 the chain carries Phosphoserine; by autocatalysis. The interval 309 to 345 (SMEVPQTPLHTARVLEEDKDHWDDVKEEMTSALATMR) is autoinhibitory helix. Thr-315 carries the post-translational modification Phosphothreonine; by MAPK14. Residues 337 to 346 (MTSALATMRV) carry the Nuclear export signal (NES) motif. The tract at residues 347 to 371 (DYDQVKIKDLKTSNNRLLNKRRKKQ) is p38 MAPK-binding site. 2 short sequence motifs (bipartite nuclear localization signal) span residues 352 to 355 (KIKD) and 366 to 370 (KRRKK). The disordered stretch occupies residues 359–384 (SNNRLLNKRRKKQGGSSSASPGCNNQ). Positions 372 to 384 (GGSSSASPGCNNQ) are enriched in polar residues.

This sequence belongs to the protein kinase superfamily. CAMK Ser/Thr protein kinase family. As to quaternary structure, heterodimer with p38-alpha/MAPK14. The heterodimer with p38-alpha/MAPK14 forms a stable complex: molecules are positioned 'face to face' so that the ATP-binding sites of both kinases are at the heterodimer interface. Interacts with TCF3 and with polycomb proteins, such as PCH2 and BMI1/PCGF4. Phosphorylated and activated by MAPK1/ERK2 and MAPK3/ERK1. Phosphorylated and activated by MAP kinase p38-alpha/MAPK14 at Thr-203, Ser-253 and Thr-315.

It is found in the nucleus. It localises to the cytoplasm. It catalyses the reaction L-seryl-[protein] + ATP = O-phospho-L-seryl-[protein] + ADP + H(+). The catalysed reaction is L-threonyl-[protein] + ATP = O-phospho-L-threonyl-[protein] + ADP + H(+). Its activity is regulated as follows. Activated following phosphorylation by p38-alpha/MAPK14 following various stresses. Inhibited by ligand 5B (2'-[2-(1,3-benzodioxol-5-yl)pyrimidin-4-yl]-5',6'-dihydrospiro[piperidine-4,7'-pyrrolo[3,2-c]pyridin]- 4'(1'h)-one) and ligand P4O (2-[2-(2-fluorophenyl)pyridin-4-yl]-1,5,6,7-tetrahydro- 4h-pyrrolo[3,2-c]pyridin-4-one), 2 ATP-competitive inhibitors. In terms of biological role, stress-activated serine/threonine-protein kinase involved in cytokines production, endocytosis, cell migration, chromatin remodeling and transcriptional regulation. Following stress, it is phosphorylated and activated by MAP kinase p38-alpha/MAPK14, leading to phosphorylation of substrates. Phosphorylates serine in the peptide sequence, Hyd-X-R-X(2)-S, where Hyd is a large hydrophobic residue. MAPKAPK2 and MAPKAPK3, share the same function and substrate specificity, but MAPKAPK3 kinase activity and level in protein expression are lower compared to MAPKAPK2. Phosphorylates HSP27/HSPB1, KRT18, KRT20, RCSD1, RPS6KA3, TAB3 and TTP/ZFP36. Mediates phosphorylation of HSP27/HSPB1 in response to stress, leading to dissociate HSP27/HSPB1 from large small heat-shock protein (sHsps) oligomers and impair their chaperone activities and ability to protect against oxidative stress effectively. Involved in inflammatory response by regulating tumor necrosis factor (TNF) and IL6 production post-transcriptionally: acts by phosphorylating AU-rich elements (AREs)-binding proteins, such as TTP/ZFP36, leading to regulate the stability and translation of TNF and IL6 mRNAs. Phosphorylation of TTP/ZFP36, a major post-transcriptional regulator of TNF, promotes its binding to 14-3-3 proteins and reduces its ARE mRNA affinity leading to inhibition of dependent degradation of ARE-containing transcript. Involved in toll-like receptor signaling pathway (TLR) in dendritic cells: required for acute TLR-induced macropinocytosis by phosphorylating and activating RPS6KA3. Also acts as a modulator of Polycomb-mediated repression. This is MAP kinase-activated protein kinase 3 (Mapkapk3) from Rattus norvegicus (Rat).